Reading from the N-terminus, the 386-residue chain is Zinc finger protein 385A (386 aa).

The segment at Ile74 to His98 adopts a Matrin-type 1 zinc-finger fold. A disordered region spans residues Glu90–Glu193. Over residues Lys103–Gly121 the composition is skewed to basic and acidic residues. A necessary for binding to ITPR1, CEBPA and p53/TP53 mRNAs region spans residues Asn145–Ala351. Ser185 carries the post-translational modification Phosphoserine. The Matrin-type 2 zinc finger occupies Leu201–His225. Thr248 carries the post-translational modification Phosphothreonine. A Matrin-type 3 zinc finger spans residues Phe261 to His285. A disordered region spans residues His279 to Leu309.

Interacts with ELAVL1; the interaction is indirect, mRNA-dependent and may regulate p53/TP53 expression. Interacts with p53/TP53; the interaction is direct and enhances p53/TP53 transactivation functions on cell-cycle arrest target genes, resulting in growth arrest. In terms of processing, ubiquitinated upon prolonged exposure to genotoxic stress, which leads to proteasomal degradation of ZNF385A and releases p53/TP53 from cell-cycle arrest target gene promoters. Expressed predominantly in the retina.

It localises to the cytoplasm. The protein localises to the nucleus. The protein resides in the nucleolus. It is found in the cell projection. Its subcellular location is the dendrite. In terms of biological role, RNA-binding protein that affects the localization and the translation of a subset of mRNA. May play a role in adipogenesis through binding to the 3'-UTR of CEBPA mRNA and regulation of its translation. Targets ITPR1 mRNA to dendrites in Purkinje cells, and may regulate its activity-dependent translation. With ELAVL1, binds the 3'-UTR of p53/TP53 mRNAs to control their nuclear export induced by CDKN2A. Hence, may regulate p53/TP53 expression and mediate in part the CDKN2A anti-proliferative activity. May also bind CCNB1 mRNA. Alternatively, may also regulate p53/TP53 activity through direct protein-protein interaction. Interacts with p53/TP53 and promotes cell-cycle arrest over apoptosis enhancing preferentially the DNA binding and transactivation of p53/TP53 on cell-cycle arrest target genes over proapoptotic target genes. May also regulate the ubiquitination and stability of CDKN1A promoting DNA damage-induced cell cycle arrest. Also plays a role in megakaryocytes differentiation. The sequence is that of Zinc finger protein 385A (ZNF385A) from Homo sapiens (Human).